We begin with the raw amino-acid sequence, 252 residues long: MLAKRIIPCLDVADGRVKKGVNFVNLTDVGDPVAIAAAYQQQGADELVFLDIAATNEHRETMAAMVEQVSAQVFMPLTIGGGITSVADMQRILRAGADKTAINSAAVANPELIRAGAEKFGNQCIVVAIDAAWDAAAGQYRVYTHGGQQATDLDAVAWAKQAVALGAGELLVTSMDRDGTKAGFDTKLYQALGATVNVPIIASGGAGNLQDFVDVFSTTPVDGALAASVFHFGELTIADVKATLRKQGVVVR.

Active-site residues include Asp11 and Asp130.

The protein belongs to the HisA/HisF family. Heterodimer of HisH and HisF.

Its subcellular location is the cytoplasm. It catalyses the reaction 5-[(5-phospho-1-deoxy-D-ribulos-1-ylimino)methylamino]-1-(5-phospho-beta-D-ribosyl)imidazole-4-carboxamide + L-glutamine = D-erythro-1-(imidazol-4-yl)glycerol 3-phosphate + 5-amino-1-(5-phospho-beta-D-ribosyl)imidazole-4-carboxamide + L-glutamate + H(+). It participates in amino-acid biosynthesis; L-histidine biosynthesis; L-histidine from 5-phospho-alpha-D-ribose 1-diphosphate: step 5/9. Its function is as follows. IGPS catalyzes the conversion of PRFAR and glutamine to IGP, AICAR and glutamate. The HisF subunit catalyzes the cyclization activity that produces IGP and AICAR from PRFAR using the ammonia provided by the HisH subunit. The sequence is that of Imidazole glycerol phosphate synthase subunit HisF from Lactiplantibacillus plantarum (strain ATCC BAA-793 / NCIMB 8826 / WCFS1) (Lactobacillus plantarum).